Reading from the N-terminus, the 262-residue chain is Hydroxyethylthiazole kinase (262 aa).

Residue methionine 50 participates in substrate binding. Residues arginine 125 and threonine 171 each contribute to the ATP site. Position 198 (glycine 198) interacts with substrate.

Belongs to the Thz kinase family. Requires Mg(2+) as cofactor.

It carries out the reaction 5-(2-hydroxyethyl)-4-methylthiazole + ATP = 4-methyl-5-(2-phosphooxyethyl)-thiazole + ADP + H(+). It participates in cofactor biosynthesis; thiamine diphosphate biosynthesis; 4-methyl-5-(2-phosphoethyl)-thiazole from 5-(2-hydroxyethyl)-4-methylthiazole: step 1/1. In terms of biological role, catalyzes the phosphorylation of the hydroxyl group of 4-methyl-5-beta-hydroxyethylthiazole (THZ). The protein is Hydroxyethylthiazole kinase of Shigella flexneri serotype 5b (strain 8401).